Here is a 181-residue protein sequence, read N- to C-terminus: Ferritin heavy chain (181 aa).

Methionine 1 bears the N-acetylmethionine mark. Threonine 2 carries the post-translational modification N-acetylthreonine; in Ferritin heavy chain, N-terminally processed. Positions 11–160 constitute a Ferritin-like diiron domain; that stretch reads QNYHQDSEAA…DHITNLHRMG (150 aa). Serine 179 carries the phosphoserine modification.

Belongs to the ferritin family. In terms of assembly, oligomer of 24 subunits. There are two types of subunits: L (light) chain and H (heavy) chain. The major chain can be light or heavy, depending on the species and tissue type. The functional molecule forms a roughly spherical shell with a diameter of 12 nm and contains a central cavity into which the insoluble mineral iron core is deposited. Interacts with NCOA4; NCOA4 promotes targeting of the iron-binding ferritin complex to autolysosomes following starvation or iron depletion. (Microbial infection) Interacts with classical swine fever virus protein NS4B. As to quaternary structure, (Microbial infection) Interacts with Porcine circovirus 2 ORF4 protein.

It is found in the cytoplasm. The protein resides in the lysosome. It localises to the cytoplasmic vesicle. Its subcellular location is the autophagosome. It catalyses the reaction 4 Fe(2+) + O2 + 4 H(+) = 4 Fe(3+) + 2 H2O. Its function is as follows. Stores iron in a soluble, non-toxic, readily available form. Important for iron homeostasis. Has ferroxidase activity. Iron is taken up in the ferrous form and deposited as ferric hydroxides after oxidation. Also plays a role in delivery of iron to cells. Mediates iron uptake in capsule cells of the developing kidney. Delivery to lysosomes is mediated by the cargo receptor NCOA4 for autophagic degradation and release of iron. Functionally, (Microbial infection) Is unable to assume its function upon interaction with viral proteins, thereby increasing Fe concentration in the cytoplasm. This would inhibit the accumulation of reactive oxygen in host cells, leading to reduced apoptosis and increasing the survival of virus infected cell. The protein is Ferritin heavy chain (FTH1) of Sus scrofa (Pig).